Here is a 425-residue protein sequence, read N- to C-terminus: Type II secretion system protein L (425 aa).

At 1 to 273 the chain is on the cytoplasmic side; sequence MKIAGKWKRK…DKAWQNTLLP (273 aa). A helical transmembrane segment spans residues 274 to 290; sequence WRGVGIAFACYLLLVVA. The Periplasmic portion of the chain corresponds to 291-425; it reads DAGWAHYQLY…EGRLTLRSQQ (135 aa).

Belongs to the GSP L family. As to quaternary structure, type II secretion system is composed of four main components: the outer membrane complex, the inner membrane complex, the cytoplasmic secretion ATPase and the periplasm-spanning pseudopilus. Forms homodimers. Interacts with OutM/GspM. Interacts with OutE/GspE and OutF/GspF.

The protein resides in the cell inner membrane. Inner membrane component of the type II secretion system required for the energy-dependent secretion of extracellular factors such as proteases and toxins from the periplasm. Plays a role in the complex assembly and recruits OutM resulting in a stable complex in the inner membrane. Provides thus a link between the energy-providing OutE protein in the cytoplasm and the rest of the T2SS machinery. In Pectobacterium carotovorum subsp. carotovorum (Erwinia carotovora subsp. carotovora), this protein is Type II secretion system protein L (outL).